We begin with the raw amino-acid sequence, 94 residues long: Large ribosomal subunit protein eL36 (94 aa).

Over residues Met1–Gly25 the composition is skewed to basic residues. Positions Met1–Thr30 are disordered.

It belongs to the eukaryotic ribosomal protein eL36 family. Component of the large ribosomal subunit.

It is found in the cytoplasm. The protein is Large ribosomal subunit protein eL36 (RPL36) of Encephalitozoon cuniculi (strain GB-M1) (Microsporidian parasite).